A 305-amino-acid chain; its full sequence is Olfactory receptor 4B13 (305 aa).

The Extracellular segment spans residues 1 to 25 (MANKNNVTELIFTGLFQDPEVQKVC). N-linked (GlcNAc...) asparagine glycosylation is present at Asn6. Residues 26 to 46 (FVLFLPVYLATLLGNSLILVA) traverse the membrane as a helical segment. Residues 47-55 (VSISKTLHS) are Cytoplasmic-facing. The helical transmembrane segment at 56 to 76 (PMYFFLSSLSLVEICYSSTIV) threads the bilayer. Over 77-95 (PKFITDLLAKVKTISLKGC) the chain is Extracellular. Cysteines 95 and 187 form a disulfide. A helical membrane pass occupies residues 96 to 116 (LTQIFFSHFFGVVEVILLVVM). At 117 to 141 (AYDRYVAICKPLHYMNIMSRQVCHM) the chain is on the cytoplasmic side. The helical transmembrane segment at 142-162 (LVAGSWLGGFIHSIIQIIITI) threads the bilayer. Topologically, residues 163–202 (PLPFCGPNVIDHYFCDLQQLFKLACTDTFMEGFIVMANSG) are extracellular. Residues 203-223 (LISIVSLFILVSSYAVILISL) traverse the membrane as a helical segment. The Cytoplasmic portion of the chain corresponds to 224–236 (RKRSAEGRRKALS). A helical transmembrane segment spans residues 237 to 257 (TCASHITVVILFFVPGAFIYM). The Extracellular portion of the chain corresponds to 258–266 (RPSSTFTED). The chain crosses the membrane as a helical span at residues 267–287 (KLVSVFYTVITPMLNPIVYTL). Topologically, residues 288–305 (RNTEMKNAIRMSWKQKDS) are cytoplasmic.

It belongs to the G-protein coupled receptor 1 family.

It is found in the cell membrane. Odorant receptor. This chain is Olfactory receptor 4B13, found in Mus musculus (Mouse).